A 618-amino-acid chain; its full sequence is DNA mismatch repair protein MutL (618 aa).

The segment at 367–402 (EPTTAREPATPRYSGGASGGNGGRQTAGGWPHAQPG) is disordered. A compositionally biased stretch (gly residues) spans 382–392 (GASGGNGGRQT).

The protein belongs to the DNA mismatch repair MutL/HexB family.

In terms of biological role, this protein is involved in the repair of mismatches in DNA. It is required for dam-dependent methyl-directed DNA mismatch repair. May act as a 'molecular matchmaker', a protein that promotes the formation of a stable complex between two or more DNA-binding proteins in an ATP-dependent manner without itself being part of a final effector complex. The sequence is that of DNA mismatch repair protein MutL from Salmonella paratyphi A (strain ATCC 9150 / SARB42).